The sequence spans 437 residues: Protein RecA (437 aa).

69–76 (GPESSGKT) serves as a coordination point for ATP. Residues 343–437 (HDAAVRTSPD…GNGKSVKRKG (95 aa)) form a disordered region. 3 stretches are compositionally biased toward polar residues: residues 350-371 (SPDT…SGSP), 380-391 (GAVNNSRDSTGG), and 400-426 (LNLS…NQKP).

Belongs to the RecA family.

The protein localises to the cytoplasm. In terms of biological role, can catalyze the hydrolysis of ATP in the presence of single-stranded DNA, the ATP-dependent uptake of single-stranded DNA by duplex DNA, and the ATP-dependent hybridization of homologous single-stranded DNAs. It interacts with LexA causing its activation and leading to its autocatalytic cleavage. This is Protein RecA from Tropheryma whipplei (strain Twist) (Whipple's bacillus).